We begin with the raw amino-acid sequence, 143 residues long: Large ribosomal subunit protein uL11 (143 aa).

This sequence belongs to the universal ribosomal protein uL11 family. As to quaternary structure, part of the ribosomal stalk of the 50S ribosomal subunit. Interacts with L10 and the large rRNA to form the base of the stalk. L10 forms an elongated spine to which L12 dimers bind in a sequential fashion forming a multimeric L10(L12)X complex. In terms of processing, one or more lysine residues are methylated.

In terms of biological role, forms part of the ribosomal stalk which helps the ribosome interact with GTP-bound translation factors. The chain is Large ribosomal subunit protein uL11 from Chromohalobacter salexigens (strain ATCC BAA-138 / DSM 3043 / CIP 106854 / NCIMB 13768 / 1H11).